Consider the following 338-residue polypeptide: Anthranilate phosphoribosyltransferase (338 aa).

5-phospho-alpha-D-ribose 1-diphosphate contacts are provided by residues Gly81, 84-85, Thr89, 91-94, 109-117, and Ala121; these read GD, NIST, and KHGNRNLSS. Residue Gly81 coordinates anthranilate. Ser93 is a binding site for Mg(2+). Residue Asn112 coordinates anthranilate. An anthranilate-binding site is contributed by Arg167. Mg(2+) is bound by residues Asp226 and Glu227.

It belongs to the anthranilate phosphoribosyltransferase family. As to quaternary structure, homodimer. Requires Mg(2+) as cofactor.

It catalyses the reaction N-(5-phospho-beta-D-ribosyl)anthranilate + diphosphate = 5-phospho-alpha-D-ribose 1-diphosphate + anthranilate. Its pathway is amino-acid biosynthesis; L-tryptophan biosynthesis; L-tryptophan from chorismate: step 2/5. Functionally, catalyzes the transfer of the phosphoribosyl group of 5-phosphorylribose-1-pyrophosphate (PRPP) to anthranilate to yield N-(5'-phosphoribosyl)-anthranilate (PRA). This chain is Anthranilate phosphoribosyltransferase, found in Cereibacter sphaeroides (strain ATCC 17023 / DSM 158 / JCM 6121 / CCUG 31486 / LMG 2827 / NBRC 12203 / NCIMB 8253 / ATH 2.4.1.) (Rhodobacter sphaeroides).